Here is a 671-residue protein sequence, read N- to C-terminus: DNA ligase (671 aa).

Residues aspartate 32 to aspartate 36, serine 81 to leucine 82, and glutamate 113 each bind NAD(+). The active-site N6-AMP-lysine intermediate is lysine 115. NAD(+)-binding residues include arginine 136, glutamate 173, lysine 290, and lysine 314. Zn(2+) is bound by residues cysteine 408, cysteine 411, cysteine 426, and cysteine 432. In terms of domain architecture, BRCT spans glutamate 593–glutamate 671.

Belongs to the NAD-dependent DNA ligase family. LigA subfamily. It depends on Mg(2+) as a cofactor. Mn(2+) serves as cofactor.

The enzyme catalyses NAD(+) + (deoxyribonucleotide)n-3'-hydroxyl + 5'-phospho-(deoxyribonucleotide)m = (deoxyribonucleotide)n+m + AMP + beta-nicotinamide D-nucleotide.. DNA ligase that catalyzes the formation of phosphodiester linkages between 5'-phosphoryl and 3'-hydroxyl groups in double-stranded DNA using NAD as a coenzyme and as the energy source for the reaction. It is essential for DNA replication and repair of damaged DNA. This is DNA ligase from Enterobacter sp. (strain 638).